The sequence spans 524 residues: General transcription factor IIF subunit 1 (524 aa).

Disordered regions lie at residues 56–76 (MYQE…RKQR) and 181–462 (RLKD…IQLT). The span at 242–257 (KPQKKVPAKGGKKKKR) shows a compositional bias: basic residues. Residues 262-289 (EALEDSDDGDFEGQEVDYMSDESSSDEE) show a composition bias toward acidic residues. A compositionally biased stretch (basic and acidic residues) spans 290-307 (LPGKIKPAKEEEGPKGLD). Composition is skewed to acidic residues over residues 308-327 (EQSE…EEGE) and 347-358 (SDESETSEDSDI). The segment covering 368–378 (QKKKTPPKKDK) has biased composition (basic residues). Residues 381 to 397 (GSNSSSRGNSRPGTPSP) are compositionally biased toward low complexity. A compositionally biased stretch (polar residues) spans 436–459 (PQNTSGKSTPQPQSGKSTPSSGDI).

It belongs to the TFIIF alpha subunit family. As to quaternary structure, heterodimer of an alpha and a beta subunit. In terms of processing, phosphorylated on Ser and other residues by TAF1 and casein kinase II-like kinases.

The protein resides in the nucleus. TFIIF is a general transcription initiation factor that binds to RNA polymerase II and helps to recruit it to the initiation complex in collaboration with TFIIB. It promotes transcription elongation. This Xenopus laevis (African clawed frog) protein is General transcription factor IIF subunit 1 (gtf2f1).